The chain runs to 382 residues: MKITRLTTYHAAPRWLFLKVETDEGITGWGEPVIEGRARSVEAAVHELAGYVVGKDPARINDLWQTLYRAGFYRGGAILMSAIAGIDQALWDIKGKTLGVPVYELLGGLVRDRMKTYRWVGGDRPGAIIQQITDYRALGFDTFKFNGTEEMKLIDSARAVDAAVVKVAEIREAFGNSIDFGIDFHGRVGAPMAKALLRELEPFKPLFVEEPVLAEQAEYYPRLAASTSIPLAAGERMFSRFEFKNVLCAGGIGMVQPDLSHAGGITECVKIAAMAEAYDVGFAPHCPLGPIALAACLHVDFVSHNAVLQEQSIGIHYNEGADLLDYVINKDDFHCVDGSIAALPKPGLGVEIDEEMLKRTNENPPDWRNPVWRHSDGSIAEW.

D183 contributes to the Mg(2+) binding site. H185 (proton donor) is an active-site residue. E209 and E235 together coordinate Mg(2+). The Proton acceptor role is filled by H285. Residues N361–W382 are disordered.

Belongs to the mandelate racemase/muconate lactonizing enzyme family. GalD subfamily. Requires Mg(2+) as cofactor.

It catalyses the reaction D-galactonate = 2-dehydro-3-deoxy-D-galactonate + H2O. It functions in the pathway carbohydrate acid metabolism; D-galactonate degradation; D-glyceraldehyde 3-phosphate and pyruvate from D-galactonate: step 1/3. Catalyzes the dehydration of D-galactonate to 2-keto-3-deoxy-D-galactonate. This is D-galactonate dehydratase from Xanthomonas euvesicatoria pv. vesicatoria (strain 85-10) (Xanthomonas campestris pv. vesicatoria).